The chain runs to 86 residues: YcgL domain-containing protein XAC4085 (86 aa).

One can recognise a YcgL domain in the interval 1–83 (MHAYVYKSQR…PKTIVLAGEC (83 aa)).

In Xanthomonas axonopodis pv. citri (strain 306), this protein is YcgL domain-containing protein XAC4085.